Here is a 1620-residue protein sequence, read N- to C-terminus: NAD-specific glutamate dehydrogenase (1620 aa).

Lysine 851 is a catalytic residue.

This sequence belongs to the Glu/Leu/Phe/Val dehydrogenases family. Homotetramer. Contains disulfide bonds (interchain).

It carries out the reaction L-glutamate + NAD(+) + H2O = 2-oxoglutarate + NH4(+) + NADH + H(+). Its activity is regulated as follows. Activity subject to allosteric control by arginine and citrate, which function as positive and negative effectors, respectively. Involved in arginine catabolism by converting L-glutamate, into 2-oxoglutarate, which is then channeled into the tricarboxylic acid cycle. Can also utilize other amino acids of the glutamate family. The sequence is that of NAD-specific glutamate dehydrogenase (gdhB) from Pseudomonas aeruginosa (strain ATCC 15692 / DSM 22644 / CIP 104116 / JCM 14847 / LMG 12228 / 1C / PRS 101 / PAO1).